Consider the following 130-residue polypeptide: Large ribosomal subunit protein bL20 (130 aa).

Belongs to the bacterial ribosomal protein bL20 family.

In terms of biological role, binds directly to 23S ribosomal RNA and is necessary for the in vitro assembly process of the 50S ribosomal subunit. It is not involved in the protein synthesizing functions of that subunit. This Clavibacter sepedonicus (Clavibacter michiganensis subsp. sepedonicus) protein is Large ribosomal subunit protein bL20.